The chain runs to 475 residues: ATP synthase subunit beta (475 aa).

152 to 159 (GGAGVGKT) serves as a coordination point for ATP.

It belongs to the ATPase alpha/beta chains family. In terms of assembly, F-type ATPases have 2 components, CF(1) - the catalytic core - and CF(0) - the membrane proton channel. CF(1) has five subunits: alpha(3), beta(3), gamma(1), delta(1), epsilon(1). CF(0) has three main subunits: a(1), b(2) and c(9-12). The alpha and beta chains form an alternating ring which encloses part of the gamma chain. CF(1) is attached to CF(0) by a central stalk formed by the gamma and epsilon chains, while a peripheral stalk is formed by the delta and b chains.

It localises to the cell membrane. It catalyses the reaction ATP + H2O + 4 H(+)(in) = ADP + phosphate + 5 H(+)(out). Produces ATP from ADP in the presence of a proton gradient across the membrane. The catalytic sites are hosted primarily by the beta subunits. This is ATP synthase subunit beta from Wolbachia pipientis wMel.